The primary structure comprises 277 residues: Carbonyl reductase [NADPH] 3 (277 aa).

Serine 2 carries the post-translational modification N-acetylserine. Residues 10 to 34 (VTGA…GDVV), 38 to 42 (RDEAR), 63 to 64 (DI), and asparagine 90 contribute to the NADP(+) site. Serine 30 is subject to Phosphoserine. Serine 140 provides a ligand contact to substrate. Catalysis depends on tyrosine 194, which acts as the Proton acceptor. 194–198 (YGVSK) serves as a coordination point for NADP(+).

It belongs to the short-chain dehydrogenases/reductases (SDR) family.

The protein resides in the cytoplasm. The catalysed reaction is a secondary alcohol + NADP(+) = a ketone + NADPH + H(+). The enzyme catalyses a quinone + NADPH + H(+) = a quinol + NADP(+). In terms of biological role, catalyzes the NADPH-dependent reduction of carbonyl compounds to their corresponding alcohols. Has low NADPH-dependent oxidoreductase activity. Acts on several orthoquinones, as well as on non-quinone compounds, such as isatin or on the anticancer drug oracin. Best substrates for CBR3 is 1,2- naphthoquinone, hence could play a role in protection against cytotoxicity of exogenous quinones. Exerts activity toward ortho-quinones but not paraquinones. No endogenous substrate for CBR3 except isatin has been identified. This Rattus norvegicus (Rat) protein is Carbonyl reductase [NADPH] 3.